The chain runs to 809 residues: Plasminogen (809 aa).

The N-terminal stretch at 1–19 (MDHKEVVLLLLLFLKSGLG) is a signal peptide. The PAN domain occupies 20 to 98 (DSLDDYVNTQ…RDVVLFEKRI (79 aa)). 24 cysteine pairs are disulfide-bonded: Cys-49-Cys-73, Cys-53-Cys-61, Cys-103-Cys-181, Cys-124-Cys-164, Cys-152-Cys-176, Cys-185-Cys-262, Cys-188-Cys-316, Cys-206-Cys-245, Cys-234-Cys-257, Cys-275-Cys-352, Cys-296-Cys-335, Cys-324-Cys-347, Cys-377-Cys-454, Cys-398-Cys-437, Cys-426-Cys-449, Cys-480-Cys-559, Cys-501-Cys-542, Cys-530-Cys-554, Cys-566-Cys-684, Cys-576-Cys-584, Cys-606-Cys-622, Cys-698-Cys-765, Cys-728-Cys-744, and Cys-755-Cys-783. 2 Kringle domains span residues 103 to 181 (CKTG…IPEC) and 185 to 262 (CMHC…IPRC). Thr-268 is a glycosylation site (O-linked (GalNAc...) threonine). Kringle domains follow at residues 275–352 (CLKG…IPSC), 377–454 (CYRG…LKKC), and 480–559 (CMFG…VPQC). Asn-308 carries N-linked (GlcNAc...) asparagine glycosylation. In terms of domain architecture, Peptidase S1 spans 580-807 (VVGGCVSIPH…FVTWIEEIMR (228 aa)). Ser-596 carries the phosphoserine modification. Active-site charge relay system residues include His-621 and Asp-664. Residue Ser-759 is the Charge relay system of the active site.

The protein belongs to the peptidase S1 family. Plasminogen subfamily. In terms of assembly, interacts with CSPG4 and AMOT. Interacts (via the Kringle domains) with HRG; the interaction tethers PLG to the cell surface and enhances its activation. Interacts (via Kringle 4 domain) with ADA; the interaction stimulates PLG activation when in complex with DPP4. Angiostatin: Interacts with ATP5F1A; the interaction inhibits most of the angiogenic effects of angiostatin. In terms of processing, N-linked glycan contains N-acetyllactosamine, sialic acid and is core fucosylated. O-linked glycans consist of Gal-GalNAc disaccharide which is modified with up to 2 sialic acid residues (microheterogeneity). In the presence of the inhibitor, the activation involves only cleavage after Arg-579, yielding two chains held together by two disulfide bonds. In the absence of the inhibitor, the activation involves additionally the removal of the activation peptide.

It is found in the secreted. The catalysed reaction is Preferential cleavage: Lys-|-Xaa &gt; Arg-|-Xaa, higher selectivity than trypsin. Converts fibrin into soluble products.. Converted into plasmin by plasminogen activators, both plasminogen and its activator being bound to fibrin. Cannot be activated with streptokinase. In terms of biological role, plasmin dissolves the fibrin of blood clots and acts as a proteolytic factor in a variety of other processes including embryonic development, tissue remodeling, tumor invasion, and inflammation. In ovulation, weakens the walls of the Graafian follicle. It activates the urokinase-type plasminogen activator, collagenases and several complement zymogens, such as C1, C4 and C5. Cleavage of fibronectin and laminin leads to cell detachment and apoptosis. Also cleaves fibrin, thrombospondin and von Willebrand factor. Its role in tissue remodeling and tumor invasion may be modulated by CSPG4. Binds to cells. In Sus scrofa (Pig), this protein is Plasminogen (PLG).